A 532-amino-acid polypeptide reads, in one-letter code: Autoinducer-2 kinase (532 aa).

The protein belongs to the FGGY kinase family.

Its subcellular location is the cytoplasm. The enzyme catalyses (S)-4,5-dihydroxypentane-2,3-dione + ATP = (2S)-2-hydroxy-3,4-dioxopentyl phosphate + ADP + H(+). Catalyzes the phosphorylation of autoinducer-2 (AI-2) to phospho-AI-2, which subsequently inactivates the transcriptional regulator LsrR and leads to the transcription of the lsr operon. Phosphorylates the ring-open form of (S)-4,5-dihydroxypentane-2,3-dione (DPD), which is the precursor to all AI-2 signaling molecules, at the C5 position. In Klebsiella pneumoniae subsp. pneumoniae (strain ATCC 700721 / MGH 78578), this protein is Autoinducer-2 kinase.